The chain runs to 383 residues: Acetylornithine deacetylase (383 aa).

Histidine 80 provides a ligand contact to Zn(2+). Residue aspartate 82 is part of the active site. Aspartate 112 contributes to the Zn(2+) binding site. The active site involves glutamate 144. Residues glutamate 145, glutamate 169, and histidine 355 each coordinate Zn(2+).

Belongs to the peptidase M20A family. ArgE subfamily. Homodimer. Zn(2+) is required as a cofactor. Requires Co(2+) as cofactor. Glutathione serves as cofactor.

The protein localises to the cytoplasm. The enzyme catalyses N(2)-acetyl-L-ornithine + H2O = L-ornithine + acetate. It participates in amino-acid biosynthesis; L-arginine biosynthesis; L-ornithine from N(2)-acetyl-L-ornithine (linear): step 1/1. Catalyzes the hydrolysis of the amide bond of N(2)-acetylated L-amino acids. Cleaves the acetyl group from N-acetyl-L-ornithine to form L-ornithine, an intermediate in L-arginine biosynthesis pathway, and a branchpoint in the synthesis of polyamines. The sequence is that of Acetylornithine deacetylase from Escherichia coli (strain SMS-3-5 / SECEC).